A 555-amino-acid polypeptide reads, in one-letter code: Coiled-coil domain-containing protein 102A (555 aa).

Disordered regions lie at residues 1 to 68 (MSHG…ADGD), 136 to 202 (LAGA…GSQE), and 214 to 254 (PEEP…EEDA). Phosphoserine occurs at positions 12, 26, and 28. The segment covering 37–61 (SLPPTPPSGTPSPGPPPALPLPPTP) has biased composition (pro residues). Residues 72-161 (REELRLRELE…ARGRELARLR (90 aa)) adopt a coiled-coil conformation. Basic and acidic residues-rich tracts occupy residues 136–159 (LAGARRERQEAQGESEARGRELAR) and 166–183 (GVDRTPDGPETEPEREQE). The segment covering 224-236 (RSAGAGAPRGSSG) has biased composition (low complexity). Coiled coils occupy residues 268-401 (QKVL…RRQT) and 432-522 (KLKK…QNAP). The segment at 478 to 555 (ELDEAHNQAR…EDEDLQIQVA (78 aa)) is disordered. Residues 536 to 555 (EAGDGASDLDEDEDLQIQVA) show a composition bias toward acidic residues. Residue Ser542 is modified to Phosphoserine.

The sequence is that of Coiled-coil domain-containing protein 102A (CCDC102A) from Bos taurus (Bovine).